The sequence spans 348 residues: E3 ubiquitin-protein ligase MARCHF9 (348 aa).

The disordered stretch occupies residues 48–96 (ARDGDGDEEEYYGSEPRARGLAGDKEPRAGPPPPPAPPPPPPGALDALS). Basic and acidic residues predominate over residues 63–75 (PRARGLAGDKEPR). Over residues 76 to 90 (AGPPPPPAPPPPPPG) the composition is skewed to pro residues. The RING-CH-type zinc-finger motif lies at 102–162 (DSGLRTPQCR…ELCYFKYQVL (61 aa)). 8 residues coordinate Zn(2+): Cys110, Cys113, Cys126, Cys128, His136, Cys139, Cys152, and Cys155. 2 helical membrane passes run 185 to 205 (IAAI…LIWS) and 219 to 239 (LFQI…GLIV). Disordered stretches follow at residues 272–304 (GDTG…AAQR) and 328–348 (PPDA…VTTV).

As to quaternary structure, homodimer.

The protein resides in the golgi apparatus membrane. The protein localises to the lysosome membrane. It carries out the reaction S-ubiquitinyl-[E2 ubiquitin-conjugating enzyme]-L-cysteine + [acceptor protein]-L-lysine = [E2 ubiquitin-conjugating enzyme]-L-cysteine + N(6)-ubiquitinyl-[acceptor protein]-L-lysine.. Its pathway is protein modification; protein ubiquitination. E3 ubiquitin-protein ligase that may mediate ubiquitination of MHC-I, CD4 and ICAM1, and promote their subsequent endocytosis and sorting to lysosomes via multivesicular bodies. E3 ubiquitin ligases accept ubiquitin from an E2 ubiquitin-conjugating enzyme in the form of a thioester and then directly transfer the ubiquitin to targeted substrates. The polypeptide is E3 ubiquitin-protein ligase MARCHF9 (Marchf9) (Mus musculus (Mouse)).